We begin with the raw amino-acid sequence, 187 residues long: Probable cobalt-precorrin-6B C(15)-methyltransferase (decarboxylating) (187 aa).

S-adenosyl-L-methionine-binding positions include threonine 17, 41–45, aspartate 62, and glycine 91; that span reads GCGTG.

This sequence belongs to the methyltransferase superfamily. Archaeal-type CbiT family.

The enzyme catalyses Co-precorrin-6B + S-adenosyl-L-methionine = Co-precorrin-7 + S-adenosyl-L-homocysteine + CO2. It participates in cofactor biosynthesis; adenosylcobalamin biosynthesis; cob(II)yrinate a,c-diamide from sirohydrochlorin (anaerobic route): step 8/10. Its function is as follows. Catalyzes the methylation of C-15 in cobalt-precorrin-6B followed by the decarboxylation of C-12 to form cobalt-precorrin-7. In Methanobrevibacter smithii (strain ATCC 35061 / DSM 861 / OCM 144 / PS), this protein is Probable cobalt-precorrin-6B C(15)-methyltransferase (decarboxylating).